A 172-amino-acid chain; its full sequence is Ribosome maturation factor RimM (172 aa).

The region spanning 96 to 169 (PDEFYDHQLE…AIEIDPPEGL (74 aa)) is the PRC barrel domain.

It belongs to the RimM family. As to quaternary structure, binds ribosomal protein uS19.

The protein localises to the cytoplasm. Its function is as follows. An accessory protein needed during the final step in the assembly of 30S ribosomal subunit, possibly for assembly of the head region. Essential for efficient processing of 16S rRNA. May be needed both before and after RbfA during the maturation of 16S rRNA. It has affinity for free ribosomal 30S subunits but not for 70S ribosomes. The protein is Ribosome maturation factor RimM of Mycolicibacterium vanbaalenii (strain DSM 7251 / JCM 13017 / BCRC 16820 / KCTC 9966 / NRRL B-24157 / PYR-1) (Mycobacterium vanbaalenii).